The chain runs to 534 residues: Lariat debranching enzyme A (534 aa).

A divalent metal cation contacts are provided by cysteine 8, histidine 10, aspartate 39, and asparagine 84. A lariat recognition loop region spans residues 124–154; sequence SGIFKSHDYRKGHFERPPYSKDTVRSAYHVR. Positions 174, 226, and 228 each coordinate a divalent metal cation. 2 disordered regions span residues 386–439 and 469–534; these read EEEK…QEDE and SMAV…DEDE. Residues 388–400 are compositionally biased toward acidic residues; it reads EKEDFDMTEDNEA. The span at 413 to 424 shows a compositional bias: polar residues; that stretch reads STDTSILSTSVN. Acidic residues predominate over residues 428 to 439; that stretch reads ITLEDDDEQEDE. Over residues 484-499 the composition is skewed to basic and acidic residues; the sequence is ELDRSESSQTEGEGKQ.

The protein belongs to the lariat debranching enzyme family. It depends on Fe(2+) as a cofactor. Zn(2+) serves as cofactor. Requires Mn(2+) as cofactor.

Its subcellular location is the nucleus. Its activity is regulated as follows. Active in presence of diverse metals including Fe(2+), Zn(2+), Mn(2+). Also activated by Ca(2+). Binds two metal cations in two adjacent alpha and beta metal-binding pockets. Functionally, cleaves the 2'-5' phosphodiester linkage at the branch point of excised lariat intron RNA and converts them into linear molecules that can be subsequently degraded, thereby facilitating ribonucleotide turnover. Linked to its role in pre-mRNA processing mechanism, may also participate in retrovirus replication and have an antiviral cell-intrinsic defense function. The sequence is that of Lariat debranching enzyme A (dbr1-a) from Xenopus laevis (African clawed frog).